A 439-amino-acid polypeptide reads, in one-letter code: Microfibrillar-associated protein 1 (439 aa).

The span at 1–17 (MSVPSSLMKQPPIQSTA) shows a compositional bias: polar residues. The interval 1 to 200 (MSVPSSLMKQ…SEDEMEPRLK (200 aa)) is disordered. Position 2 is an N-acetylserine (Ser-2). Over residues 23–34 (RNEKGEISMEKV) the composition is skewed to basic and acidic residues. Phosphoserine occurs at positions 52 and 53. Residues 61 to 70 (QFIKKAKEQE) show a composition bias toward basic and acidic residues. Lys-67 participates in a covalent cross-link: Glycyl lysine isopeptide (Lys-Gly) (interchain with G-Cter in SUMO2). A compositionally biased stretch (acidic residues) spans 71-81 (AEPEEQEEDSS). Ser-94, Ser-116, Ser-118, Ser-132, and Ser-133 each carry phosphoserine. Composition is skewed to acidic residues over residues 112–122 (VVGESDSEVEG) and 131–144 (DSSEEEEEEIDEEE). Over residues 145–163 (IERRRGMMRQRAQERKNEE) the composition is skewed to basic and acidic residues. Positions 178 to 195 (ESESESEYEEYTDSEDEM) are enriched in acidic residues. Residue Lys-249 forms a Glycyl lysine isopeptide (Lys-Gly) (interchain with G-Cter in SUMO2) linkage. Thr-267 is modified (phosphothreonine). Residue Lys-357 forms a Glycyl lysine isopeptide (Lys-Gly) (interchain with G-Cter in SUMO2) linkage. Ser-361 carries the post-translational modification Phosphoserine. Glycyl lysine isopeptide (Lys-Gly) (interchain with G-Cter in SUMO2) cross-links involve residues Lys-371, Lys-381, Lys-415, and Lys-418. Phosphoserine is present on Ser-432.

The protein belongs to the MFAP1 family. As to quaternary structure, component of the spliceosome B complex. Interacts with PRPF38A (via N-terminal interaction domain).

It localises to the nucleus. In terms of biological role, involved in pre-mRNA splicing as a component of the spliceosome. The sequence is that of Microfibrillar-associated protein 1 from Bos taurus (Bovine).